A 357-amino-acid chain; its full sequence is Phosphate acyltransferase (357 aa).

The protein belongs to the PlsX family. As to quaternary structure, homodimer. Probably interacts with PlsY.

It localises to the cytoplasm. It catalyses the reaction a fatty acyl-[ACP] + phosphate = an acyl phosphate + holo-[ACP]. It functions in the pathway lipid metabolism; phospholipid metabolism. Catalyzes the reversible formation of acyl-phosphate (acyl-PO(4)) from acyl-[acyl-carrier-protein] (acyl-ACP). This enzyme utilizes acyl-ACP as fatty acyl donor, but not acyl-CoA. The sequence is that of Phosphate acyltransferase from Herminiimonas arsenicoxydans.